Reading from the N-terminus, the 134-residue chain is Neuropeptide-like peptide 11 (134 aa).

The first 20 residues, Met1 to Ala20, serve as a signal peptide directing secretion. Positions Ala21–Lys106 are excised as a propeptide. Ala131 is modified (alanine amide).

The protein is Neuropeptide-like peptide 11 (nlp-11) of Caenorhabditis elegans.